A 260-amino-acid polypeptide reads, in one-letter code: Glutathione S-transferase domain-containing protein DDB_G0280881 (260 aa).

A GST N-terminal domain is found at 7–96 (KVDFIFYTNG…YLAQKYNTFL (90 aa)). One can recognise a GST C-terminal domain in the interval 102-228 (NPKENSDVIT…QQISEGFKNF (127 aa)).

This sequence belongs to the GST superfamily.

This chain is Glutathione S-transferase domain-containing protein DDB_G0280881, found in Dictyostelium discoideum (Social amoeba).